A 108-amino-acid polypeptide reads, in one-letter code: Thioredoxin C-2 (108 aa).

One can recognise a Thioredoxin domain in the interval 2 to 108 (SATIVNTTDE…KLAAFIDQNI (107 aa)). Cys33 and Cys36 form a disulfide bridge.

It belongs to the thioredoxin family.

Participates in various redox reactions through the reversible oxidation of its active center dithiol to a disulfide and catalyzes dithiol-disulfide exchange reactions. The polypeptide is Thioredoxin C-2 (Corynebacterium nephridii).